A 391-amino-acid polypeptide reads, in one-letter code: ATP phosphoribosyltransferase regulatory subunit (391 aa).

The protein belongs to the class-II aminoacyl-tRNA synthetase family. HisZ subfamily. As to quaternary structure, heteromultimer composed of HisG and HisZ subunits.

Its subcellular location is the cytoplasm. Its pathway is amino-acid biosynthesis; L-histidine biosynthesis; L-histidine from 5-phospho-alpha-D-ribose 1-diphosphate: step 1/9. In terms of biological role, required for the first step of histidine biosynthesis. May allow the feedback regulation of ATP phosphoribosyltransferase activity by histidine. This Bacillus pumilus (strain SAFR-032) protein is ATP phosphoribosyltransferase regulatory subunit.